Reading from the N-terminus, the 164-residue chain is Probable ribosome biogenesis protein RLP24 (164 aa).

It belongs to the eukaryotic ribosomal protein eL24 family. In terms of assembly, associated with nucleolar and cytoplasmic pre-60S particles. At the end of biogenesis it dissociates from cytoplasmic pre-60S particles and is likely to be exchanged for its ribosomal homolog, RPL24.

The protein resides in the cytoplasm. It is found in the nucleus. Its function is as follows. Involved in the biogenesis of the 60S ribosomal subunit. Ensures the docking of nog1 to pre-60S particles. Activates and recruits ATPase AFG2 to cytoplasmic pre-60S ribosomal particles. The chain is Probable ribosome biogenesis protein RLP24 (rlp24) from Dictyostelium discoideum (Social amoeba).